A 516-amino-acid polypeptide reads, in one-letter code: D-aminopeptidase (516 aa).

Serine 61 serves as the catalytic Nucleophile. Catalysis depends on lysine 64, which acts as the Proton donor/acceptor. An important for specificity region spans residues 476-486; it reads RRSMDAPAPGD. Substrate is bound at residue aspartate 480.

The protein belongs to the peptidase S12 family. In terms of assembly, homodimer.

The enzyme catalyses Release of an N-terminal D-amino acid from a peptide, Xaa-|-Yaa-, in which Xaa is preferably D-Ala, D-Ser or D-Thr. D-amino acid amides and methyl esters also are hydrolyzed, as is glycine amide.. With respect to regulation, inhibited by beta-lactam compounds such as 6-aminopenicillic acid, 7-aminocephalosporanic acid, benzylpenicillin and ampicillin. Inhibited by p-chloromercuribenzoate. Functionally, hydrolyzes N-terminal residues in D-amino acid-containing peptides. This Cereibacter sphaeroides (strain KD131 / KCTC 12085) (Rhodobacter sphaeroides) protein is D-aminopeptidase.